The chain runs to 366 residues: UDP-N-acetylglucosamine--N-acetylmuramyl-(pentapeptide) pyrophosphoryl-undecaprenol N-acetylglucosamine transferase (366 aa).

UDP-N-acetyl-alpha-D-glucosamine is bound by residues 15-17, Asn-127, Arg-175, Ser-201, Ile-255, and Gln-300; that span reads TGG.

The protein belongs to the glycosyltransferase 28 family. MurG subfamily.

The protein localises to the cell inner membrane. The enzyme catalyses di-trans,octa-cis-undecaprenyl diphospho-N-acetyl-alpha-D-muramoyl-L-alanyl-D-glutamyl-meso-2,6-diaminopimeloyl-D-alanyl-D-alanine + UDP-N-acetyl-alpha-D-glucosamine = di-trans,octa-cis-undecaprenyl diphospho-[N-acetyl-alpha-D-glucosaminyl-(1-&gt;4)]-N-acetyl-alpha-D-muramoyl-L-alanyl-D-glutamyl-meso-2,6-diaminopimeloyl-D-alanyl-D-alanine + UDP + H(+). It participates in cell wall biogenesis; peptidoglycan biosynthesis. Its function is as follows. Cell wall formation. Catalyzes the transfer of a GlcNAc subunit on undecaprenyl-pyrophosphoryl-MurNAc-pentapeptide (lipid intermediate I) to form undecaprenyl-pyrophosphoryl-MurNAc-(pentapeptide)GlcNAc (lipid intermediate II). The protein is UDP-N-acetylglucosamine--N-acetylmuramyl-(pentapeptide) pyrophosphoryl-undecaprenol N-acetylglucosamine transferase of Thiobacillus denitrificans (strain ATCC 25259 / T1).